We begin with the raw amino-acid sequence, 222 residues long: UPF0758 protein TM_1557 (222 aa).

Residues 101–222 (KLDSSVKVYK…YFSFREEGEL (122 aa)) enclose the MPN domain. H171, H173, and D184 together coordinate Zn(2+). Positions 171–184 (HNHPSGDPTPSKED) match the JAMM motif motif.

This sequence belongs to the UPF0758 family.

The polypeptide is UPF0758 protein TM_1557 (Thermotoga maritima (strain ATCC 43589 / DSM 3109 / JCM 10099 / NBRC 100826 / MSB8)).